The primary structure comprises 238 residues: MRATTLLSSVVSLALLSKEVLATPPACLLACVAQVGKSSSTCDSLNQVTCYCEHENSAVKKCLDSICPNNDADAAYSAFKSSCSEQNASLGDSSSSASSSASSSSKASSSTKASSSSASSSTKASSSSASSSTKASSSSAAPSSSKASSTESSSSSSSSTKAPSSEESSSTYVSSSKQASSTSEAHSSSAASSTVSQETVSSALPTSTAVISTFSEGSGNVLEAGKSVFIAAVAAMLI.

The first 22 residues, 1–22, serve as a signal peptide directing secretion; the sequence is MRATTLLSSVVSLALLSKEVLA. The CFEM domain occupies 23–110; that stretch reads TPPACLLACV…ASSSSKASSS (88 aa). Intrachain disulfides connect C27–C67, C31–C62, C42–C50, and C52–C83. N87 carries an N-linked (GlcNAc...) asparagine glycan. A disordered region spans residues 91–203; the sequence is GDSSSSASSS…TVSQETVSSA (113 aa). Positions 93–203 are enriched in low complexity; that stretch reads SSSSASSSAS…TVSQETVSSA (111 aa). A Glycyl lysine isopeptide (Lys-Gly) (interchain with G-Cter in ubiquitin) cross-link involves residue K161. A lipid anchor (GPI-anchor amidated glycine) is attached at G217. The propeptide at 218 to 238 is removed in mature form; it reads SGNVLEAGKSVFIAAVAAMLI.

It belongs to the CCW14 family. Post-translationally, extensively O-glycosylated. The GPI-anchor is attached to the protein in the endoplasmic reticulum and serves to target the protein to the cell surface. There, the glucosamine-inositol phospholipid moiety is cleaved off and the GPI-modified mannoprotein is covalently attached via its lipidless GPI glycan remnant to the 1,6-beta-glucan of the outer cell wall layer.

It localises to the secreted. It is found in the cell wall. The protein localises to the membrane. Component of the inner layer of the cell wall. This Saccharomyces cerevisiae (strain ATCC 204508 / S288c) (Baker's yeast) protein is Covalently-linked cell wall protein 14 (CCW14).